A 491-amino-acid chain; its full sequence is GTPase Der (491 aa).

2 EngA-type G domains span residues 3–166 and 200–373; these read PVVA…AEAM and IKLA…DSAT. GTP-binding positions include 9 to 16, 56 to 60, 118 to 121, 206 to 213, 253 to 257, and 318 to 321; these read GRPNVGKS, DTGGI, NKVD, GKPNVGKS, DTAGV, and NKWD. The KH-like domain occupies 374–458; that stretch reads RRVSTSMLTR…PIQIRFQEGD (85 aa). The interval 472 to 491 is disordered; it reads QERRRKRALSHINDRKTKGE.

Belongs to the TRAFAC class TrmE-Era-EngA-EngB-Septin-like GTPase superfamily. EngA (Der) GTPase family. As to quaternary structure, associates with the 50S ribosomal subunit.

Functionally, GTPase that plays an essential role in the late steps of ribosome biogenesis. In Shewanella denitrificans (strain OS217 / ATCC BAA-1090 / DSM 15013), this protein is GTPase Der.